A 46-amino-acid polypeptide reads, in one-letter code: Protein PsbN (46 aa).

Residues 7-27 traverse the membrane as a helical segment; it reads ALSVALGVMAVVLGLTGFGVY.

The protein belongs to the PsbN family.

The protein localises to the cellular thylakoid membrane. Its function is as follows. May play a role in photosystem I and II biogenesis. This Synechococcus sp. (strain CC9902) protein is Protein PsbN.